The sequence spans 365 residues: Spermidine-binding periplasmic protein SpuE (365 aa).

The N-terminal stretch at 1–24 is a signal peptide; the sequence is MQHSIGKTLLVAALATAIAGPVQA. Positions 35, 181, 242, and 269 each coordinate spermidine.

This sequence belongs to the bacterial solute-binding protein PotD/PotF family.

It is found in the periplasm. Functionally, spermidine-binding protein probably required for its uptake into cells. Binds spermidine with high affinity (KD=14.3 nM). Does not bind putrescine, cadaverine or spermine. Spermidine binding induces large inter-domain conformational changes. Implicated in induction of type 3 secretion systems (T3SS), which play a role in virulence. This Pseudomonas aeruginosa (strain ATCC 15692 / DSM 22644 / CIP 104116 / JCM 14847 / LMG 12228 / 1C / PRS 101 / PAO1) protein is Spermidine-binding periplasmic protein SpuE (spuE).